The sequence spans 565 residues: Adenine deaminase 1 (565 aa).

This sequence belongs to the metallo-dependent hydrolases superfamily. Adenine deaminase family. It depends on Mn(2+) as a cofactor.

The catalysed reaction is adenine + H2O + H(+) = hypoxanthine + NH4(+). In Rhizobium etli (strain ATCC 51251 / DSM 11541 / JCM 21823 / NBRC 15573 / CFN 42), this protein is Adenine deaminase 1.